Here is a 298-residue protein sequence, read N- to C-terminus: Enoyl-CoA hydratase AKT6-1 (298 aa).

The disordered stretch occupies residues 1 to 23; the sequence is MTFSTTKSVAMSPDDDAPSFDIN.

This sequence belongs to the enoyl-CoA hydratase/isomerase family.

It participates in mycotoxin biosynthesis. In terms of biological role, enoyl-CoA hydratase; part of the gene clusters that mediate the biosynthesis of the host-selective toxins (HSTs) AK-toxins responsible for Japanese pear black spot disease by the Japanese pear pathotype. AK-toxins are esters of 9,10-epoxy 8-hydroxy 9-methyldecatrienoic acid (EDA). On cellular level, AK-toxins affect plasma membrane of susceptible cells and cause a sudden increase in loss of K(+) after a few minutes of toxin treatment. The acyl-CoA ligase AKT1, the hydrolase AKT2 and enoyl-CoA hydratase AKT3 are all involved in the biosynthesis of the AK-, AF- and ACT-toxin common 9,10-epoxy-8-hydroxy-9-methyl-decatrienoic acid (EDA) structural moiety. Part of the EDA biosynthesis occurs in the peroxisome since these 3 enzymes are localized in peroxisomes. The exact roles of the 3 enzymes, as well as of additional AK-toxin clusters enzymes, including AKT4, AKT6 and AKTS1, have still to be elucidated. The Cytochrome P450 monooxygenase AKT7 on the other side functions to limit production of EDA and AK-toxin, probably via the catalysis of a side reaction of EDA or its precursor. The sequence is that of Enoyl-CoA hydratase AKT6-1 from Alternaria alternata (Alternaria rot fungus).